A 381-amino-acid chain; its full sequence is Homoserine O-succinyltransferase (381 aa).

The 316-residue stretch at 45–360 folds into the AB hydrolase-1 domain; it reads NAVLVCHALN…PHGHDAFLLD (316 aa). Ser-151 serves as the catalytic Nucleophile. Substrate is bound at residue Arg-221. Residues Asp-321 and His-354 contribute to the active site. Asp-355 contacts substrate.

This sequence belongs to the AB hydrolase superfamily. MetX family. Homodimer.

It localises to the cytoplasm. It catalyses the reaction L-homoserine + succinyl-CoA = O-succinyl-L-homoserine + CoA. Its pathway is amino-acid biosynthesis; L-methionine biosynthesis via de novo pathway; O-succinyl-L-homoserine from L-homoserine: step 1/1. In terms of biological role, transfers a succinyl group from succinyl-CoA to L-homoserine, forming succinyl-L-homoserine. In Burkholderia mallei (strain NCTC 10247), this protein is Homoserine O-succinyltransferase.